Consider the following 126-residue polypeptide: Large ribosomal subunit protein bL17 (126 aa).

The protein belongs to the bacterial ribosomal protein bL17 family. Part of the 50S ribosomal subunit. Contacts protein L32.

The chain is Large ribosomal subunit protein bL17 from Xylella fastidiosa (strain M12).